The sequence spans 83 residues: Kappa-ctenitoxin-Pn1a (83 aa).

Positions 1 to 21 (MWFKIQVLVLAITLITLGIQA) are cleaved as a signal peptide. Positions 22–37 (EPNSSPNNPLIVEEDR) are excised as a propeptide. Disulfide bonds link cysteine 40–cysteine 55, cysteine 47–cysteine 60, cysteine 54–cysteine 71, and cysteine 62–cysteine 69. Positions 78–83 (LFGFGK) are excised as a propeptide.

It belongs to the neurotoxin 02 (plectoxin) family. As to expression, expressed by the venom gland.

It localises to the secreted. Its function is as follows. Antagonist of L-type calcium channels (Cav1/CACNA1). In GH3 neuroendocrinal cell line, it reversibly inhibits the A-type potassium current but does not block other potassium currents or calcium channels. Shows an important acetylcholine-mediated antiarrhythmogenic effect in isolated hearts. In vivo, causes paralysis in the posterior limbs and gradual decreases in movement and aggression during 24 hours at dose levels of 5 ug per mouse. This chain is Kappa-ctenitoxin-Pn1a, found in Phoneutria nigriventer (Brazilian armed spider).